The following is a 723-amino-acid chain: Probable inactive serine/threonine-protein kinase fnkD (723 aa).

The 244-residue stretch at 33-276 (WEIITQLESN…TTSLPKYSTL (244 aa)) folds into the Protein kinase domain. FNIP repeat units lie at residues 301-342 (FNQP…ELAS), 343-384 (FNQT…LLSS), 385-426 (FNQP…SLAS), 524-565 (FNQS…ILPS), 566-606 (FNHP…LGDE), and 647-690 (FNIE…FGIT).

The protein belongs to the protein kinase superfamily. STE Ser/Thr protein kinase family.

This Dictyostelium discoideum (Social amoeba) protein is Probable inactive serine/threonine-protein kinase fnkD (fnkD-1).